The chain runs to 229 residues: Cytochrome b6-f complex iron-sulfur subunit, chloroplastic (229 aa).

The N-terminal 50 residues, 1-50 (MASSSLSPATQLGSSRSALMAMSSGLFVKPTKMNHQMVRKEKIGLRISCQ), are a transit peptide targeting the chloroplast. The helical transmembrane segment at 68-90 (LNLLLLGALSLPTGYMLVPYATF) threads the bilayer. The 97-residue stretch at 115-211 (AAEWLKTHGP…ADIDEAGKVL (97 aa)) folds into the Rieske domain. [2Fe-2S] cluster-binding residues include C157, H159, C175, and H178. C162 and C177 are oxidised to a cystine. The residue at position 196 (S196) is a Phosphoserine.

Belongs to the Rieske iron-sulfur protein family. In terms of assembly, the 4 large subunits of the cytochrome b6-f complex are cytochrome b6, subunit IV (17 kDa polypeptide, petD), cytochrome f and the Rieske protein, while the 4 small subunits are petG, petL, petM and petN. The complex functions as a dimer. Interacts with PGRL1A. Component of a mitochondrial large protein complex that contains, at least, MIC60, DGS1, TOM40, TOM20 proteins, and petC/RISP. Requires [2Fe-2S] cluster as cofactor. As to expression, confined to photosynthetic tissues, with highest levels in flowers. In leaves, mostly localized in mesophyll cells. In stems, confined to the peripheral ring of chlorenchyma and adjoining groups of cells associated with the vascular bundles. In siliques, present in green wall of the fruit and in peduncle but not in the translucide white septum of the seeds.

It is found in the plastid. The protein resides in the chloroplast thylakoid membrane. The protein localises to the mitochondrion inner membrane. The enzyme catalyses 2 oxidized [plastocyanin] + a plastoquinol + 2 H(+)(in) = 2 reduced [plastocyanin] + a plastoquinone + 4 H(+)(out). Functionally, essential protein for photoautotrophism. Confers resistance to photo-oxidative damages by contributing to the thermal dissipation of light energy and to lumenal acidification (increase of pH gradient). Component of the cytochrome b6-f complex, which mediates electron transfer between photosystem II (PSII) and photosystem I (PSI), cyclic electron flow around PSI, and state transitions. This Arabidopsis thaliana (Mouse-ear cress) protein is Cytochrome b6-f complex iron-sulfur subunit, chloroplastic.